Consider the following 473-residue polypeptide: Microtubule-binding protein TANGLED (473 aa).

The tract at residues 1 to 132 (MVARTPQKQR…VTRDIVDAIA (132 aa)) is required for binding to TAN and location to the cortical division sites (CDS) during cytokinesis. 2 disordered regions span residues 131-218 (IAPK…ENSF) and 290-354 (ASKF…LSTA). Polar residues-rich tracts occupy residues 205–216 (ISPQVKGNNGEN) and 307–329 (PTRN…TRTV).

Interacts with POK1. As to expression, strongly expressed in flower buds and root tips.

The protein resides in the nucleus. It localises to the nucleolus. Its subcellular location is the cytoplasm. It is found in the cytoskeleton. The protein localises to the phragmoplast. Functionally, is required for spatial control cell division during plant development. Through an association with microtubules, acts both for the positioning of cytoskeletal arrays that establish planes of cell division during prophase and for spatial guidance of expanding phragmoplasts toward preestablished cortical division sites (CDS) during cytokinesis. The sequence is that of Microtubule-binding protein TANGLED (TAN) from Arabidopsis thaliana (Mouse-ear cress).